Here is a 113-residue protein sequence, read N- to C-terminus: Nucleoid-associated protein FMG_0513 (113 aa).

The interval 1 to 44 (MGNKFRGGMPGMGNMGNMMKQMQKMQRQMEETQKRLEETEVTAT) is disordered. Low complexity predominate over residues 15 to 26 (MGNMMKQMQKMQ). The segment covering 27–38 (RQMEETQKRLEE) has biased composition (basic and acidic residues).

Belongs to the YbaB/EbfC family. In terms of assembly, homodimer.

Its subcellular location is the cytoplasm. The protein localises to the nucleoid. Binds to DNA and alters its conformation. May be involved in regulation of gene expression, nucleoid organization and DNA protection. In Finegoldia magna (strain ATCC 29328 / DSM 20472 / WAL 2508) (Peptostreptococcus magnus), this protein is Nucleoid-associated protein FMG_0513.